The following is a 131-amino-acid chain: Small ribosomal subunit protein bS6 (131 aa).

The disordered stretch occupies residues 98-131; that stretch reads EASPMVKAKDERRERRDDFANETADDADAGDSEE. Positions 104–116 are enriched in basic and acidic residues; that stretch reads KAKDERRERRDDF. Acidic residues predominate over residues 120 to 131; it reads TADDADAGDSEE.

This sequence belongs to the bacterial ribosomal protein bS6 family.

Functionally, binds together with bS18 to 16S ribosomal RNA. The polypeptide is Small ribosomal subunit protein bS6 (Citrobacter koseri (strain ATCC BAA-895 / CDC 4225-83 / SGSC4696)).